The chain runs to 456 residues: Ribonuclease inhibitor (456 aa).

M1 carries the N-acetylmethionine modification. LRR repeat units lie at residues 15 to 43, 44 to 71, 72 to 100, 101 to 128, 129 to 157, 158 to 185, 186 to 214, 215 to 242, 243 to 271, 272 to 299, 300 to 328, 329 to 356, 357 to 385, 386 to 413, and 414 to 442; these read WTELLPLIQQYEVVRLDDCGLTEVRCKDI, SSAVQANPALTELSLRTNELGDGGVGLV, LQGLQNPTCKIQKLSLQNCGLTEAGCGIL, PGMLRSLSTLRELHLNDNPMGDAGLKLL, CEGLQDPQCRLEKLQLEYCNLTATSCEPL, ASVLRVKADFKELVLSNNDLHEPGVRIL, CQGLKDSACQLESLKLENCGITAANCKDL, CDVVASKASLQELDLSSNKLGNAGIAAL, CPGLLLPSCKLRTLWLWECDITAEGCKDL, CRVLRAKQSLKELSLASNELKDEGARLL, CESLLEPGCQLESLWIKTCSLTAASCPYF, CSVLTKSRSLLELQMSSNPLGDEGVQEL, CKALSQPDTVLRELWLGDCDVTNSGCSSL, ANVLLANRSLRELDLSNNCMGGPGVLQL, and LESLKQPSCTLQQLVLYDIYWTNEVEEQL. A Phosphoserine modification is found at S86.

Forms high-affinity heterodimers with RNASE1, ANG and RNASE2.

It is found in the cytoplasm. The protein localises to the nucleus. Functionally, ribonuclease inhibitor which inhibits RNASE1, RNASE2 and angiogenin (ANG). May play a role in redox homeostasis. Required to inhibit the cytotoxic tRNA ribonuclease activity of ANG in the cytoplasm in absence of stress. Relocates to the nucleus in response to stress, relieving inhibition of ANG in the cytoplasm, and inhibiting the angiogenic activity of ANG in the nucleus. This Mus musculus (Mouse) protein is Ribonuclease inhibitor (Rnh1).